We begin with the raw amino-acid sequence, 401 residues long: Argininosuccinate synthase (401 aa).

8-16 contributes to the ATP binding site; the sequence is AYSGGLDTS. Y86 provides a ligand contact to L-citrulline. An ATP-binding site is contributed by G116. Residues T118, N122, and D123 each coordinate L-aspartate. N122 provides a ligand contact to L-citrulline. L-citrulline contacts are provided by R126, S174, E258, and Y270.

Belongs to the argininosuccinate synthase family. Type 1 subfamily. Homotetramer.

It localises to the cytoplasm. The enzyme catalyses L-citrulline + L-aspartate + ATP = 2-(N(omega)-L-arginino)succinate + AMP + diphosphate + H(+). It participates in amino-acid biosynthesis; L-arginine biosynthesis; L-arginine from L-ornithine and carbamoyl phosphate: step 2/3. The protein is Argininosuccinate synthase of Acidothermus cellulolyticus (strain ATCC 43068 / DSM 8971 / 11B).